Consider the following 856-residue polypeptide: MGRKLDLSGLTDDETEHVLQVVQRDFNLRKKEEDRLSEMKQRLAEENSKCSILSKHQKFVERCCMRCCSPFTFLVNARRRCGECKFSVCKSCCSYQKHEKLWVCCVCQQARLLRTQSLEWFYNNVKSRFKRFGSAKVLKNLYRKHRLESGACFDILGGGLFEPNLENEGSISGSDSTFYRQSEGHSMMDTLAVALRVAEEAIEEAISKAESHGDSLDKQNEASYLRDHKQELTEELAGTILQRIIRKQKDKAELRAEEEEPEWPRSQSGSVKARGEGTTAPPGRHKARATFRRSQSAFSFTMEDALKSGSAEAAPRSPKDRAQRLLEEAALPSWRSMDGLDGTNLAPLLQSPDGNWMTLKDGSRQPPTRLLTKPKSGTFQALEVASSVTSAYDEIGSDSEEDFDYSEALSKLCPPSQSRLKQPQPQPTQAQSSGQGPLATSPSNPEAMCSDSETSSTSSSREAGCRAKLSWLQRKAPKNPAVEKMPLQGELDVNFNPQAAGGETSDSSDPEETLRTAERRARRWRRARVGPEESNRGLPSPGAHPRALHTAQVSDNVSETDISNETQNSRSSTDSVEEKLRNRLYELAMKMSEKETSSGEDQESESKAEPKNQKGSLSSEENNQGVQEELKKKCSAVSLCNISTEVLKVINATEELIAESAGPWEIPPVSTDRENGMFPLGTDQVRLDKQLTSLEENVYLAAGTVYGLEGQLSELEDAARCIHSSTGETELADLEDQVAAAAAQVHHAELQISDIESRISALTIAGLNIAPCVRLTRRRDQKQRSQVQTIDTSRQQRRKLPAPPVKAEKIEASSVTPIKTFNRNFLLQGSSTNRPTASTGDTKDLMEPDLESAVMY.

One can recognise a RabBD domain in the interval 4–124 (KLDLSGLTDD…TQSLEWFYNN (121 aa)). The FYVE-type zinc-finger motif lies at 63-105 (CCMRCCSPFTFLVNARRRCGECKFSVCKSCCSYQKHEKLWVCC). Positions 143 to 560 (RKHRLESGAC…AQVSDNVSET (418 aa)) are myosin-binding. The segment at 193–209 (VALRVAEEAIEEAISKA) is PRKAR2A-binding. Residues 232–248 (LTEELAGTILQRIIRKQ) form a negative regulation of PRKAR2A-binding region. Residues 252-294 (AELRAEEEEPEWPRSQSGSVKARGEGTTAPPGRHKARATFRRS) are disordered. A phosphoserine mark is found at serine 299 and serine 351. Disordered regions lie at residues 351-578 (SPDG…SVEE), 592-625 (SEKETSSGEDQESESKAEPKNQKGSLSSEENNQG), 778-806 (RRDQKQRSQVQTIDTSRQQRRKLPAPPVK), and 826-856 (LLQGSSTNRPTASTGDTKDLMEPDLESAVMY). Acidic residues predominate over residues 395 to 405 (IGSDSEEDFDY). 2 stretches are compositionally biased toward low complexity: residues 427 to 437 (PTQAQSSGQGP) and 450 to 460 (SDSETSSTSSS). The segment at 495–856 (FNPQAAGGET…EPDLESAVMY (362 aa)) is actin-binding. 4 stretches are compositionally biased toward polar residues: residues 551–574 (AQVSDNVSETDISNETQNSRSSTD), 613–625 (QKGSLSSEENNQG), 784–793 (RSQVQTIDTS), and 826–840 (LLQGSSTNRPTASTG).

As to quaternary structure, binds RAB27A that has been activated by GTP-binding via its N-terminus. Binds MYO5A, MYO7A and F-actin. Interacts with PRKAR2A. Interacts with components of the exocyst complex, including EXOC3 and EXOC4. As to expression, detected in brain, skin, heart, lung, adrenal medulla, pancreas, intestine, liver, kidney, skeletal muscle and testis. Detected in cochlear and vestibular hair cells in the inner ear, and in photoreceptor and pigment epithelium cells in the retina.

The protein resides in the cytoplasm. It localises to the perinuclear region. Its subcellular location is the cytoplasmic vesicle. It is found in the secretory vesicle. The protein localises to the melanosome. Its function is as follows. Rab effector protein involved in melanosome transport. Serves as link between melanosome-bound RAB27A and the motor proteins MYO5A and MYO7A. May link RAB27A-containing vesicles to actin filaments. Functions as a protein kinase A-anchoring protein (AKAP). May act as a scaffolding protein that links PKA to components of the exocytosis machinery, thus facilitating exocytosis, including insulin release. The chain is Rab effector MyRIP (Myrip) from Mus musculus (Mouse).